The following is a 71-amino-acid chain: Small ribosomal subunit protein bS21 (71 aa).

The segment at 38-71 is disordered; that stretch reads YEKPTTERKRARASAIKRHAKKLARENARRTRLY. Over residues 46 to 59 the composition is skewed to basic residues; it reads KRARASAIKRHAKK. The segment covering 60–71 has biased composition (basic and acidic residues); it reads LARENARRTRLY.

Belongs to the bacterial ribosomal protein bS21 family.

The sequence is that of Small ribosomal subunit protein bS21 from Hamiltonella defensa subsp. Acyrthosiphon pisum (strain 5AT).